A 400-amino-acid polypeptide reads, in one-letter code: 3-phenylpropionate/cinnamic acid dioxygenase ferredoxin--NAD(+) reductase component (400 aa).

5-36 is an FAD binding site; the sequence is TIIIVGGGQAAAMAAASLRQQGFTGELHLFSD. 146–174 is a binding site for NAD(+); it reads SVVIVGAGTIGLELAASATQRRCKVTVIE.

It belongs to the bacterial ring-hydroxylating dioxygenase ferredoxin reductase family. This dioxygenase system consists of four proteins: the two subunits of the hydroxylase component (HcaE and HcaF), a ferredoxin (HcaC) and a ferredoxin reductase (HcaD). Requires FAD as cofactor.

It catalyses the reaction 2 reduced [2Fe-2S]-[ferredoxin] + NAD(+) + H(+) = 2 oxidized [2Fe-2S]-[ferredoxin] + NADH. The protein operates within aromatic compound metabolism; 3-phenylpropanoate degradation. Its function is as follows. Part of the multicomponent 3-phenylpropionate dioxygenase, that converts 3-phenylpropionic acid (PP) and cinnamic acid (CI) into 3-phenylpropionate-dihydrodiol (PP-dihydrodiol) and cinnamic acid-dihydrodiol (CI-dihydrodiol), respectively. The sequence is that of 3-phenylpropionate/cinnamic acid dioxygenase ferredoxin--NAD(+) reductase component from Shigella sonnei (strain Ss046).